Consider the following 145-residue polypeptide: Mannitol-specific phosphotransferase enzyme IIA component (145 aa).

The PTS EIIA type-2 domain maps to 4–143 (TILSTETIKV…QEVLAFLGEV (140 aa)). Catalysis depends on histidine 64, which acts as the Tele-phosphohistidine intermediate. Position 64 is a phosphohistidine; by HPr (histidine 64).

It localises to the cytoplasm. Functionally, the phosphoenolpyruvate-dependent sugar phosphotransferase system (sugar PTS), a major carbohydrate active transport system, catalyzes the phosphorylation of incoming sugar substrates concomitantly with their translocation across the cell membrane. The enzyme II CmtAB PTS system is involved in D-mannitol transport. In Halalkalibacterium halodurans (strain ATCC BAA-125 / DSM 18197 / FERM 7344 / JCM 9153 / C-125) (Bacillus halodurans), this protein is Mannitol-specific phosphotransferase enzyme IIA component (mtlF).